Consider the following 397-residue polypeptide: 2-oxoglutarate and iron-dependent oxygenase domain-containing protein ICU11 (397 aa).

The segment at 1 to 56 (MCNQTPLRSMALDSSGKQPEQQQQQQPRASSGNGEARLKLRRTPNEEHEPENYEDL) is disordered. Low complexity predominate over residues 18-27 (QPEQQQQQQP). Residues 238 to 339 (SLDSHHGYIV…RANLILWCRS (102 aa)) enclose the Fe2OG dioxygenase domain. Fe cation contacts are provided by His-260, Asp-262, and His-320. A 2-oxoglutarate-binding site is contributed by Arg-330.

The cofactor is Fe(2+). It depends on L-ascorbate as a cofactor. As to expression, expressed in roots, cotyledons, rosette leaves, cauline leaves and inflorescences.

It localises to the nucleus. Its subcellular location is the nucleoplasm. In terms of biological role, participates in the epigenetic repression of flowering genes in association with CP2. Functions in the repression of several members of the MADS-box transcription factors family, including SEP3, during vegetative development via histone modification. The sequence is that of 2-oxoglutarate and iron-dependent oxygenase domain-containing protein ICU11 from Arabidopsis thaliana (Mouse-ear cress).